A 508-amino-acid chain; its full sequence is Zinc finger CCCH-type with G patch domain-containing protein (508 aa).

A C3H1-type zinc finger spans residues 154–177 (PCNYYLEGECRFDETRCRYSHGAL). A disordered region spans residues 253–279 (DDELSSDSEETNETDGSDAANESDMDD). A G-patch domain is found at 309 to 355 (TRGIGSKLMASMGYIHGTGLGSDGRGIVTPVSAQILPQGRSLDACME). The span at 486-495 (QAQESSLSKE) shows a compositional bias: polar residues. Residues 486 to 508 (QAQESSLSKEQQTRKSKNKMFEF) form a disordered region. Positions 499 to 508 (RKSKNKMFEF) are enriched in basic residues.

The protein localises to the nucleus. Its function is as follows. Transcription repressor. The sequence is that of Zinc finger CCCH-type with G patch domain-containing protein from Drosophila virilis (Fruit fly).